The following is a 248-amino-acid chain: Probable transcriptional regulatory protein Oter_1471 (248 aa).

This sequence belongs to the TACO1 family.

It is found in the cytoplasm. The protein is Probable transcriptional regulatory protein Oter_1471 of Opitutus terrae (strain DSM 11246 / JCM 15787 / PB90-1).